Here is a 542-residue protein sequence, read N- to C-terminus: Major facilitator superfamily transporter mfsA (542 aa).

11 helical membrane passes run 19 to 39 (FAAVVGFSLFGYNQGMMAGLL), 70 to 90 (GAVTSCYELGCFFGALFSMFC), 99 to 119 (LIFMGASILIVGALLTTVCYT), 127 to 149 (FVIGRVVSGIGNGMNTATIPVWQ), 160 to 180 (FLVCFEGAMIAGGTFIAYWVV), 194 to 214 (FPVALQIFFALVVATGALMLP), 321 to 341 (IMGGVFASVYALATIPSFFMI), 349 to 369 (LYLIGFLGQGLSFVITFACLI), 380 to 400 (AVGIFLFITFFAFTLLPLPWI), 413 to 432 (VGASASTCTNWMCNFAVVMF), and 444 to 464 (VYLFFALFNFVGLIFGYFFYV).

It belongs to the major facilitator superfamily. Sugar transporter (TC 2.A.1.1) family.

It is found in the membrane. Functionally, major facilitator superfamily transporter that may be involved in A.fumigatus adaptation to azoles such as vorizonazole. The polypeptide is Major facilitator superfamily transporter mfsA (Aspergillus fumigatus (strain ATCC MYA-4609 / CBS 101355 / FGSC A1100 / Af293) (Neosartorya fumigata)).